Here is a 436-residue protein sequence, read N- to C-terminus: Bifunctional IPC transferase and DIPP synthase (436 aa).

The interval 11 to 241 (GVGAAVLAAG…LSEEMVLGWA (231 aa)) is mobA-like NTP transferase. CTP-binding positions include 17-19 (LAA) and Lys32. Residues 242 to 435 (ASGNDGPVSR…RRLLALKRGR (194 aa)) form a CDP-alcohol phosphatidyltransferases region. 3 consecutive transmembrane segments (helical) span residues 275 to 295 (VSLL…AGRL), 349 to 371 (AGTR…VSYT), and 397 to 417 (LAVL…LATG).

The protein in the N-terminal section; belongs to the MobA family. It in the C-terminal section; belongs to the CDP-alcohol phosphatidyltransferase class-I family.

The protein resides in the membrane. The catalysed reaction is 1D-myo-inositol 3-phosphate + CTP + H(+) = CDP-1L-myo-inositol + diphosphate. It carries out the reaction CDP-1L-myo-inositol + 1D-myo-inositol 3-phosphate = bis(1L-myo-inositol) 3,1'-phosphate 1-phosphate + CMP + H(+). Its function is as follows. Involved in biosynthesis of di-myo-inositol phosphate (DIP), a widespread organic solute in microorganisms adapted to hot environments. Catalyzes the condensation of CTP and L-myo-inositol-1-phosphate into CDP-L-myo-inositol, as well as the biosynthesis of di-myo-inositol-1,3'-phosphate-1'-phosphate (DIPP) from CDP-L-myo-inositol and L-myo-inositol-1-phosphate. The protein is Bifunctional IPC transferase and DIPP synthase of Rubrobacter xylanophilus (strain DSM 9941 / JCM 11954 / NBRC 16129 / PRD-1).